The primary structure comprises 282 residues: MSLVTSLTYVLPHRLLSSLARALAYSNRPATKQWLIDTVTRKFGVDLSEAQEPDPRAYPTFNAFFTRALKHGARVPDADPAALLMPADGRISQLGPIENGRIFQAKGQSFTAAELLGDAGAAAPFNNGLFATVYLSPKDYHRVHMPWTGTLRTTVHVPGRLFSVGPDAVRNVPRLFARNERLVCHFDTDFGPMASVMVGALLVSGVETVWSGVEIPRYGDRITRKDYRGKGIVLEKFAEMARFNYGSTVIVLLPPGVATLDGGLGAETSVRLGQALARRQLG.

Residues Asp88, His144, and Ser247 each act as charge relay system; for autoendoproteolytic cleavage activity in the active site. Ser247 functions as the Schiff-base intermediate with substrate; via pyruvic acid; for decarboxylase activity in the catalytic mechanism. Position 247 is a pyruvic acid (Ser); by autocatalysis (Ser247).

It belongs to the phosphatidylserine decarboxylase family. PSD-B subfamily. Prokaryotic type I sub-subfamily. Heterodimer of a large membrane-associated beta subunit and a small pyruvoyl-containing alpha subunit. The cofactor is pyruvate. Post-translationally, is synthesized initially as an inactive proenzyme. Formation of the active enzyme involves a self-maturation process in which the active site pyruvoyl group is generated from an internal serine residue via an autocatalytic post-translational modification. Two non-identical subunits are generated from the proenzyme in this reaction, and the pyruvate is formed at the N-terminus of the alpha chain, which is derived from the carboxyl end of the proenzyme. The autoendoproteolytic cleavage occurs by a canonical serine protease mechanism, in which the side chain hydroxyl group of the serine supplies its oxygen atom to form the C-terminus of the beta chain, while the remainder of the serine residue undergoes an oxidative deamination to produce ammonia and the pyruvoyl prosthetic group on the alpha chain. During this reaction, the Ser that is part of the protease active site of the proenzyme becomes the pyruvoyl prosthetic group, which constitutes an essential element of the active site of the mature decarboxylase.

The protein resides in the cell membrane. It carries out the reaction a 1,2-diacyl-sn-glycero-3-phospho-L-serine + H(+) = a 1,2-diacyl-sn-glycero-3-phosphoethanolamine + CO2. Its pathway is phospholipid metabolism; phosphatidylethanolamine biosynthesis; phosphatidylethanolamine from CDP-diacylglycerol: step 2/2. In terms of biological role, catalyzes the formation of phosphatidylethanolamine (PtdEtn) from phosphatidylserine (PtdSer). This chain is Phosphatidylserine decarboxylase proenzyme, found in Xanthomonas oryzae pv. oryzae (strain KACC10331 / KXO85).